The following is a 77-amino-acid chain: Conotoxin G11.1 (77 aa).

Residues M1–A20 form the signal peptide. Positions E21–R45 are excised as a propeptide. Cystine bridges form between C46/C60, C53/C65, C59/C69, and C64/C76.

This sequence belongs to the conotoxin I3 superfamily. Expressed by the venom duct.

The protein localises to the secreted. May embed in the membrane and bind to the voltage sensor domain of a ion channel. Does not induce paralysis when injected in fish, leading to the hypothesis that it may be part of the sedative nirvana cabal. The sequence is that of Conotoxin G11.1 from Conus geographus (Geography cone).